A 424-amino-acid polypeptide reads, in one-letter code: MNNEILTLQVGKTGILTGNEFWKSLVREKNLLSDFSLGKNSPTNDNVFFEESNESFFIPRTIIFDLSERDFNYIMKSNYSKMYDKNRHFILNKNTGNSWLKGYYEGISNCNLVDNILRKRIEKMNSVKYFNVFNSINGGTGAGLSSYLIEYIRNNYPKSFINCCSIFPDLYGNTQVTFQPYNSVLSIAWQGLYCDSNIFFQNHAIENLLTKNQINNELSFRKVNYIIGKTISIIMNTLNHNFTLETLISPLIVNPYLNLFFSTINIDILLSKLRKKRPSMIENKTNQLNEISMNLDLKSGNYLSSIELSNRNFYKLFANSIYDKIFYDQTRFYSQLLNQYDSVIINNNVKKENYSSLTYLLNHTSFNPVIKKIIQNFELLKKRNAFLEYYCGEILLDEANTLFRESKDYILDIINNYDNILSYY.

137-143 provides a ligand contact to GTP; that stretch reads NGGTGAG.

It belongs to the tubulin family.

Tubulin is the major constituent of microtubules. The gamma chain is found at microtubule organizing centers (MTOC) such as the spindle poles or the centrosome, suggesting that it is involved in the minus-end nucleation of microtubule assembly. This Guillardia theta (Cryptophyte) protein is Tubulin gamma chain, nucleomorph (tubG).